Consider the following 741-residue polypeptide: Pentatricopeptide repeat-containing protein At3g58590 (741 aa).

20 PPR repeats span residues 48 to 78 (PVYV…MPER), 79 to 113 (NKVS…GYLP), 114 to 146 (NQST…GLFM), 148 to 178 (DAFV…MPFK), 179 to 213 (SLET…GASL), 214 to 248 (TESS…GLDC), 249 to 279 (EISV…AGSW), 280 to 314 (DIVS…GFSP), 315 to 349 (NQGT…GCET), 350 to 380 (GIVL…IRDK), 381 to 414 (NIVC…GFRP), 415 to 445 (TEYT…GYED), 446 to 481 (NDYV…SVVP), 483 to 508 (NIVA…LEQP), 509 to 543 (DTVS…NIRP), 544 to 578 (DKYT…DFSC), 580 to 610 (DTFV…TREK), 611 to 645 (NLIT…GFKP), 646 to 680 (DRVS…GVEP), and 681 to 715 (EMDH…ADAP).

It belongs to the PPR family. P subfamily.

This is Pentatricopeptide repeat-containing protein At3g58590 from Arabidopsis thaliana (Mouse-ear cress).